Here is a 384-residue protein sequence, read N- to C-terminus: Polyketide synthase BAS (384 aa).

Catalysis depends on C157, which acts as the Nucleophile and monoketide coumarate intermediate. C157 carries the post-translational modification S-(4-hydroxycinnamyl)cysteine.

The protein belongs to the thiolase-like superfamily. Chalcone/stilbene synthases family. In terms of assembly, homodimer.

It catalyses the reaction 4-coumaroyl-CoA + malonyl-CoA + H2O + H(+) = 4-hydroxybenzalacetone + 2 CO2 + 2 CoA. Its pathway is secondary metabolite biosynthesis; flavonoid biosynthesis. Its function is as follows. Polyketide synthase producing 4-hydroxybenzalacetone. Can use p-coumaryl-CoA as substrate but does not accept hexanoyl-CoA, isobutyryl-CoA, isovaleryl-CoA, and acetyl-CoA as a substrates. Catalyzes the initial key reaction step in the biosynthesis of phenylbutanoids. In Rheum palmatum (Chinese rhubarb), this protein is Polyketide synthase BAS (BAS).